We begin with the raw amino-acid sequence, 1335 residues long: Aldehyde oxidase 3 (1335 aa).

Residues 8 to 95 (DELIFFVNGK…GAAVTTVEGI (88 aa)) form the 2Fe-2S ferredoxin-type domain. [2Fe-2S] cluster is bound by residues Cys47, Cys52, Cys55, and Cys77. Gln116 lines the Mo-molybdopterin pocket. Cys117, Cys120, Cys152, and Cys154 together coordinate [2Fe-2S] cluster. The 186-residue stretch at 236 to 421 (FRGERTTWIA…ISVFVPRSSK (186 aa)) folds into the FAD-binding PCMH-type domain. 264–271 (LVIGNTYL) is an FAD binding site. Residue Ser320 is modified to Phosphoserine. Positions 354, 358, 367, and 411 each coordinate FAD. Mo-molybdopterin-binding residues include Ala802, Leu1043, and Gln1199. Glu1266 serves as the catalytic Proton acceptor; for azaheterocycle hydroxylase activity.

The protein belongs to the xanthine dehydrogenase family. As to quaternary structure, homodimer. Requires [2Fe-2S] cluster as cofactor. The cofactor is FAD. It depends on Mo-molybdopterin as a cofactor. In terms of tissue distribution, highly expressed in liver (at protein level). In liver, the expression is greater in males than females.

Its subcellular location is the cytoplasm. It catalyses the reaction an aldehyde + O2 + H2O = a carboxylate + H2O2 + H(+). Its activity is regulated as follows. Inhibited by potassium cyanide, menadione, benzamidine, raloxifene and norharmane. Its function is as follows. Oxidase with broad substrate specificity, oxidizing aromatic azaheterocycles, such as N1-methylnicotinamide and phthalazine, as well as aldehydes, such as benzaldehyde, retinal and pyridoxal. Plays a key role in the metabolism of xenobiotics and drugs containing aromatic azaheterocyclic substituents. Is probably involved in the regulation of reactive oxygen species homeostasis. May be a prominent source of superoxide generation via the one-electron reduction of molecular oxygen. May also catalyze nitric oxide (NO) production via the reduction of nitrite to NO with NADH or aldehyde as electron donor. In Mus musculus (Mouse), this protein is Aldehyde oxidase 3 (Aox3).